The following is a 117-amino-acid chain: uncharacterized protein (117 aa).

Residues 16-56 (FSQSSDGRSNGGGSSSGDSVSTTSDGLLTTGTSPNTSSTSL) are disordered. The span at 31–56 (SGDSVSTTSDGLLTTGTSPNTSSTSL) shows a compositional bias: low complexity.

This is an uncharacterized protein from Saccharomyces cerevisiae (strain ATCC 204508 / S288c) (Baker's yeast).